The sequence spans 478 residues: Isoeugenol monooxygenase (478 aa).

Fe cation contacts are provided by His-167, His-218, His-282, and His-471.

Belongs to the carotenoid oxygenase family. Monomer. Requires Fe(2+) as cofactor.

It catalyses the reaction (E)-isoeugenol + O2 = vanillin + acetaldehyde. Inhibited by HgCl(2), AgNO(3), CuCl(2), phenylhydrazine, 8-hydroxyquinoline, R-cycloserine and p-chloromercuribenzoic acid. Involved in isoeugenol degradation. Catalyzes the oxidative cleavage of the side chain double-bond of isoeugenol to form vanillin and acetaldehyde. This chain is Isoeugenol monooxygenase, found in Pseudomonas putida (Arthrobacter siderocapsulatus).